The sequence spans 422 residues: CRISPR-associated endodeoxyribonuclease Cas12f1 (422 aa).

The segment at 1–126 is recognition domain (REC); sequence MIKVYRYEIV…PSYKRDIPLD (126 aa). Residues 127-211 are wedge domain (WED); the sequence is LIKENISVNR…YLNISYDFEP (85 aa). Residues 212-220 form a linker region; that stretch reads QTRVLDLNK. Residues 221–370 are ruvC-I; it reads IMGIDLGVAV…IKIDPQYTSQ (150 aa). Residues Asp225 and Glu324 contribute to the active site. Positions 371 to 399 are target nucleic acid-binding (TNB); that stretch reads RCSECGNIDSGNRIGQAIFKCRACGYEAN. Cys372, Cys375, Cys391, and Cys394 together coordinate Zn(2+). The ruvC-II stretch occupies residues 400-420; it reads ADYNAARNIAIPNIDKIIAES. Residue Asp401 is part of the active site.

Belongs to the CRISPR-associated endonuclease Cas12f family. In terms of assembly, an asymmetric homodimer. Guide RNA is probably required for dimerization. The cofactor is Mg(2+). Requires Zn(2+) as cofactor.

Functionally, CRISPR (clustered regularly interspaced short palindromic repeat), is an adaptive immune system that provides protection against mobile genetic elements (viruses, transposable elements and conjugative plasmids). CRISPR clusters contain sequences complementary to antecedent mobile elements and target invading nucleic acids. CRISPR clusters are transcribed and processed into CRISPR RNA (crRNA), which requires a trans-encoded small RNA (tracrRNA), but not this protein. Recognizes a short motif in the CRISPR repeat sequences (the 5' PAM or protospacer adjacent motif, YTT in this organism) to help distinguish self versus nonself, as targets within the CRISPR locus do not have PAMs. Has dsDNA endonuclease activity upon expression in E.coli of this protein, a mini CRISPR array and the probable tracrRNA. Plasmid cleavage is centered around positions 19-24 base pairs 3' of PAM. The mini system protects E.coli against transformation by foreign plasmids. The sequence is that of CRISPR-associated endodeoxyribonuclease Cas12f1 from Sulfoacidibacillus thermotolerans (Acidibacillus sulfuroxidans).